A 195-amino-acid chain; its full sequence is dTTP/UTP pyrophosphatase (195 aa).

Catalysis depends on aspartate 76, which acts as the Proton acceptor.

It belongs to the Maf family. YhdE subfamily. Requires a divalent metal cation as cofactor.

It is found in the cytoplasm. It catalyses the reaction dTTP + H2O = dTMP + diphosphate + H(+). The catalysed reaction is UTP + H2O = UMP + diphosphate + H(+). Its function is as follows. Nucleoside triphosphate pyrophosphatase that hydrolyzes dTTP and UTP. May have a dual role in cell division arrest and in preventing the incorporation of modified nucleotides into cellular nucleic acids. This Shewanella frigidimarina (strain NCIMB 400) protein is dTTP/UTP pyrophosphatase.